Consider the following 171-residue polypeptide: 3-hydroxydecanoyl-[acyl-carrier-protein] dehydratase (171 aa).

Histidine 70 is a catalytic residue.

This sequence belongs to the thioester dehydratase family. FabA subfamily. In terms of assembly, homodimer.

The protein resides in the cytoplasm. It carries out the reaction a (3R)-hydroxyacyl-[ACP] = a (2E)-enoyl-[ACP] + H2O. The catalysed reaction is (3R)-hydroxydecanoyl-[ACP] = (2E)-decenoyl-[ACP] + H2O. It catalyses the reaction (2E)-decenoyl-[ACP] = (3Z)-decenoyl-[ACP]. It participates in lipid metabolism; fatty acid biosynthesis. Functionally, necessary for the introduction of cis unsaturation into fatty acids. Catalyzes the dehydration of (3R)-3-hydroxydecanoyl-ACP to E-(2)-decenoyl-ACP and then its isomerization to Z-(3)-decenoyl-ACP. Can catalyze the dehydratase reaction for beta-hydroxyacyl-ACPs with saturated chain lengths up to 16:0, being most active on intermediate chain length. This is 3-hydroxydecanoyl-[acyl-carrier-protein] dehydratase from Xanthomonas campestris pv. campestris (strain 8004).